Consider the following 276-residue polypeptide: Diaminopimelate epimerase (276 aa).

Residues Asn-13, Gln-46, and Asn-66 each contribute to the substrate site. Cys-75 acts as the Proton donor in catalysis. Residues 76–77, Asn-159, Asn-192, and 210–211 contribute to the substrate site; these read GN and ER. Catalysis depends on Cys-219, which acts as the Proton acceptor. 220 to 221 serves as a coordination point for substrate; the sequence is GT.

It belongs to the diaminopimelate epimerase family. As to quaternary structure, homodimer.

The protein resides in the cytoplasm. The catalysed reaction is (2S,6S)-2,6-diaminopimelate = meso-2,6-diaminopimelate. It functions in the pathway amino-acid biosynthesis; L-lysine biosynthesis via DAP pathway; DL-2,6-diaminopimelate from LL-2,6-diaminopimelate: step 1/1. In terms of biological role, catalyzes the stereoinversion of LL-2,6-diaminopimelate (L,L-DAP) to meso-diaminopimelate (meso-DAP), a precursor of L-lysine and an essential component of the bacterial peptidoglycan. The protein is Diaminopimelate epimerase of Ectopseudomonas mendocina (strain ymp) (Pseudomonas mendocina).